The sequence spans 1217 residues: ATP-dependent helicase/nuclease subunit A (1217 aa).

In terms of domain architecture, UvrD-like helicase ATP-binding spans 10–475; sequence VIWTDAQWQS…MDLSQNFRSR (466 aa). Residue 31-38 participates in ATP binding; the sequence is AAAGSGKT. Residues 491-786 enclose the UvrD-like helicase C-terminal domain; the sequence is DEQVGEVNYD…RMMTIHSSKG (296 aa).

The protein belongs to the helicase family. AddA subfamily. Heterodimer of AddA and AddB/RexB. The cofactor is Mg(2+).

It carries out the reaction Couples ATP hydrolysis with the unwinding of duplex DNA by translocating in the 3'-5' direction.. The catalysed reaction is ATP + H2O = ADP + phosphate + H(+). Its function is as follows. The heterodimer acts as both an ATP-dependent DNA helicase and an ATP-dependent, dual-direction single-stranded exonuclease. Recognizes the chi site generating a DNA molecule suitable for the initiation of homologous recombination. The AddA nuclease domain is required for chi fragment generation; this subunit has the helicase and 3' -&gt; 5' nuclease activities. In Staphylococcus aureus (strain bovine RF122 / ET3-1), this protein is ATP-dependent helicase/nuclease subunit A.